The following is a 102-amino-acid chain: Small ribosomal subunit protein bS20 (102 aa).

It belongs to the bacterial ribosomal protein bS20 family.

Functionally, binds directly to 16S ribosomal RNA. The chain is Small ribosomal subunit protein bS20 from Gloeobacter violaceus (strain ATCC 29082 / PCC 7421).